We begin with the raw amino-acid sequence, 436 residues long: Small ribosomal subunit protein uS5m (436 aa).

The S5 DRBM domain maps to 152-218; sequence FETYCLEVKR…GMASRKLFHV (67 aa). Residues 417–436 are disordered; that stretch reads GVEPMPLGIGLSHVVPKKDD.

Belongs to the universal ribosomal protein uS5 family. As to quaternary structure, component of the mitochondrial ribosome small subunit (28S) which comprises a 12S rRNA and about 30 distinct proteins.

The protein resides in the mitochondrion. In Caenorhabditis elegans, this protein is Small ribosomal subunit protein uS5m (mrps-5).